We begin with the raw amino-acid sequence, 252 residues long: ATP synthase subunit a (252 aa).

Transmembrane regions (helical) follow at residues 6 to 26 (LEQF…YFSF), 31 to 51 (LFML…TLNG), 88 to 108 (FFPL…IGMI), 117 to 137 (HFII…IVGF), 144 to 164 (FFSI…LVLL), 190 to 212 (LVKI…YLGQ), and 225 to 245 (LELG…CIYL).

This sequence belongs to the ATPase A chain family. In terms of assembly, F-type ATPases have 2 components, CF(1) - the catalytic core - and CF(0) - the membrane proton channel. CF(1) has five subunits: alpha(3), beta(3), gamma(1), delta(1), epsilon(1). CF(0) has three main subunits: a, b and c.

The protein resides in the mitochondrion inner membrane. In terms of biological role, mitochondrial membrane ATP synthase (F(1)F(0) ATP synthase or Complex V) produces ATP from ADP in the presence of a proton gradient across the membrane which is generated by electron transport complexes of the respiratory chain. F-type ATPases consist of two structural domains, F(1) - containing the extramembraneous catalytic core and F(0) - containing the membrane proton channel, linked together by a central stalk and a peripheral stalk. During catalysis, ATP synthesis in the catalytic domain of F(1) is coupled via a rotary mechanism of the central stalk subunits to proton translocation. Key component of the proton channel; it may play a direct role in the translocation of protons across the membrane. The protein is ATP synthase subunit a (ATP6) of Marchantia polymorpha (Common liverwort).